Reading from the N-terminus, the 879-residue chain is Oxysterol-binding protein-related protein 5 (879 aa).

A disordered region spans residues 1–73; that stretch reads MKEEAFLRRR…TPSSATKVPP (73 aa). Phosphoserine is present on Ser-12. Residues 93–123 are a coiled coil; that stretch reads VTKKETLKAQKENYRQEKKRATRQLLSALTD. The PH domain occupies 126–243; sequence VVIMADSLKI…WLDALELALR (118 aa). The segment at 254-341 is disordered; that stretch reads KPGRDGEPGT…TPGAPVRRGT (88 aa). Basic and acidic residues-rich tracts occupy residues 300–309 and 316–325; these read FSDKSERENP and TQDHSRKTES. Residues 384-389, 446-449, and 478-479 contribute to the a 1,2-diacyl-sn-glycero-3-phospho-(1D-myo-inositol 4-phosphate) site; these read LSRVVL, KPYN, and HH. A 1,2-diacyl-sn-glycero-3-phospho-L-serine-binding positions include 384–389 and Asn-449; that span reads LSRVVL. Ser-504 provides a ligand contact to a 1,2-diacyl-sn-glycero-3-phospho-L-serine. Positions 670, 674, and 678 each coordinate a 1,2-diacyl-sn-glycero-3-phospho-(1D-myo-inositol 4-phosphate). Residues 742–806 are disordered; it reads TTFLGSPGPR…FVPGGESPCP (65 aa). Ser-747 is subject to Phosphoserine. A compositionally biased stretch (basic and acidic residues) spans 750–765; that stretch reads PRHERSGPDQRLRKAS. Polar residues predominate over residues 766-783; it reads DQPSGHSQATESSGSTPE. Residues 860–878 traverse the membrane as a helical segment; the sequence is SWFLLCVFLACQLFINHIL.

The protein belongs to the OSBP family. Ubiquitously expressed.

The protein localises to the endoplasmic reticulum membrane. Functionally, lipid transporter involved in lipid countertransport between the endoplasmic reticulum and the plasma membrane: specifically exchanges phosphatidylserine with phosphatidylinositol 4-phosphate (PI4P), delivering phosphatidylserine to the plasma membrane in exchange for PI4P, which is degraded by the SAC1/SACM1L phosphatase in the endoplasmic reticulum. Binds phosphatidylserine and PI4P in a mutually exclusive manner. May cooperate with NPC1 to mediate the exit of cholesterol from endosomes/lysosomes. Binds 25-hydroxycholesterol and cholesterol. This Homo sapiens (Human) protein is Oxysterol-binding protein-related protein 5 (OSBPL5).